We begin with the raw amino-acid sequence, 1012 residues long: DNA polymerase catalytic subunit (1012 aa).

Belongs to the DNA polymerase type-B family.

The protein localises to the host nucleus. The enzyme catalyses DNA(n) + a 2'-deoxyribonucleoside 5'-triphosphate = DNA(n+1) + diphosphate. This is DNA polymerase catalytic subunit (U38) from Homo sapiens (Human).